The chain runs to 959 residues: Isoleucine--tRNA ligase (959 aa).

The 'HIGH' region signature appears at 60–70 (PYANGSLHMGH). E569 serves as a coordination point for L-isoleucyl-5'-AMP. Positions 610 to 614 (KMSKS) match the 'KMSKS' region motif. Residue K613 participates in ATP binding. Zn(2+) is bound by residues C928, C931, C948, and C951.

The protein belongs to the class-I aminoacyl-tRNA synthetase family. IleS type 1 subfamily. In terms of assembly, monomer. Requires Zn(2+) as cofactor.

The protein resides in the cytoplasm. The enzyme catalyses tRNA(Ile) + L-isoleucine + ATP = L-isoleucyl-tRNA(Ile) + AMP + diphosphate. In terms of biological role, catalyzes the attachment of isoleucine to tRNA(Ile). As IleRS can inadvertently accommodate and process structurally similar amino acids such as valine, to avoid such errors it has two additional distinct tRNA(Ile)-dependent editing activities. One activity is designated as 'pretransfer' editing and involves the hydrolysis of activated Val-AMP. The other activity is designated 'posttransfer' editing and involves deacylation of mischarged Val-tRNA(Ile). The chain is Isoleucine--tRNA ligase from Crocosphaera subtropica (strain ATCC 51142 / BH68) (Cyanothece sp. (strain ATCC 51142)).